A 247-amino-acid polypeptide reads, in one-letter code: uncharacterized protein (247 aa).

One can recognise an N-acetyltransferase domain in the interval 70–205 (ISLWMGPGNN…QKVPLEIMIR (136 aa)).

This sequence belongs to the acetyltransferase family.

Its subcellular location is the endoplasmic reticulum. It is found in the golgi apparatus. It localises to the vacuole. This is an uncharacterized protein from Schizosaccharomyces pombe (strain 972 / ATCC 24843) (Fission yeast).